The sequence spans 296 residues: 4-hydroxy-tetrahydrodipicolinate synthase (296 aa).

Residue T49 participates in pyruvate binding. Y137 (proton donor/acceptor) is an active-site residue. Catalysis depends on K166, which acts as the Schiff-base intermediate with substrate. A pyruvate-binding site is contributed by I208.

The protein belongs to the DapA family. In terms of assembly, homotetramer; dimer of dimers.

Its subcellular location is the cytoplasm. It carries out the reaction L-aspartate 4-semialdehyde + pyruvate = (2S,4S)-4-hydroxy-2,3,4,5-tetrahydrodipicolinate + H2O + H(+). It participates in amino-acid biosynthesis; L-lysine biosynthesis via DAP pathway; (S)-tetrahydrodipicolinate from L-aspartate: step 3/4. Catalyzes the condensation of (S)-aspartate-beta-semialdehyde [(S)-ASA] and pyruvate to 4-hydroxy-tetrahydrodipicolinate (HTPA). This chain is 4-hydroxy-tetrahydrodipicolinate synthase, found in Azobacteroides pseudotrichonymphae genomovar. CFP2.